The chain runs to 150 residues: UPF0178 protein Reut_B5138 (150 aa).

The protein belongs to the UPF0178 family.

In Cupriavidus pinatubonensis (strain JMP 134 / LMG 1197) (Cupriavidus necator (strain JMP 134)), this protein is UPF0178 protein Reut_B5138.